Consider the following 191-residue polypeptide: Glutathione-independent glyoxalase DJ-1 (191 aa).

Residues E16, C111, and H130 contribute to the active site.

This sequence belongs to the peptidase C56 family.

The protein localises to the cytoplasm. Its subcellular location is the nucleus. It catalyses the reaction methylglyoxal + H2O = (R)-lactate + H(+). Its function is as follows. Catalyzes the conversion of methylglyoxal (MG) to D-lactate in a single glutathione (GSH)-independent step. May play a role in detoxifying endogenously produced glyoxals. Involved in protection against reactive oxygen species (ROS). The chain is Glutathione-independent glyoxalase DJ-1 from Schizosaccharomyces pombe (strain 972 / ATCC 24843) (Fission yeast).